The following is a 305-amino-acid chain: Phospho-N-acetylmuramoyl-pentapeptide-transferase (305 aa).

Transmembrane regions (helical) follow at residues 1–21 (MLMV…RASK), 46–66 (AGGV…YLSG), 73–93 (ELLI…DDWL), 113–133 (FPLQ…LASH), 139–159 (LGPV…VNAF), 174–194 (IIVL…VAVL), 207–227 (VFMG…AYIL), 233–253 (LLPI…IQVI), and 282–302 (VTIR…WLLG).

This sequence belongs to the glycosyltransferase 4 family. MraY subfamily. It depends on Mg(2+) as a cofactor.

The protein localises to the cell membrane. It catalyses the reaction UDP-N-acetyl-alpha-D-muramoyl-L-alanyl-gamma-D-glutamyl-meso-2,6-diaminopimeloyl-D-alanyl-D-alanine + di-trans,octa-cis-undecaprenyl phosphate = di-trans,octa-cis-undecaprenyl diphospho-N-acetyl-alpha-D-muramoyl-L-alanyl-D-glutamyl-meso-2,6-diaminopimeloyl-D-alanyl-D-alanine + UMP. It participates in cell wall biogenesis; peptidoglycan biosynthesis. Functionally, catalyzes the initial step of the lipid cycle reactions in the biosynthesis of the cell wall peptidoglycan: transfers peptidoglycan precursor phospho-MurNAc-pentapeptide from UDP-MurNAc-pentapeptide onto the lipid carrier undecaprenyl phosphate, yielding undecaprenyl-pyrophosphoryl-MurNAc-pentapeptide, known as lipid I. The chain is Phospho-N-acetylmuramoyl-pentapeptide-transferase from Deinococcus deserti (strain DSM 17065 / CIP 109153 / LMG 22923 / VCD115).